We begin with the raw amino-acid sequence, 400 residues long: Dual specificity mitogen-activated protein kinase kinase 2 (400 aa).

At methionine 1 the chain carries N-acetylmethionine. Serine 23 bears the Phosphoserine mark. The region spanning 72–369 (FERISELGAG…LKLLTNHAFI (298 aa)) is the Protein kinase domain. ATP-binding positions include 78-86 (LGAGNGGVV) and lysine 101. Aspartate 194 serves as the catalytic Proton acceptor. Serine 222 and serine 226 each carry phosphoserine; by RAF. The segment at 282–310 (PVVDGADGEPHSVSPRPRPPGRPISGHGM) is disordered. Phosphoserine occurs at positions 293, 295, and 306. Phosphothreonine is present on residues threonine 394 and threonine 396.

This sequence belongs to the protein kinase superfamily. STE Ser/Thr protein kinase family. MAP kinase kinase subfamily. As to quaternary structure, interacts with MORG1. Interacts with SGK1. Interacts with KSR1. Interacts with KSR1 and BRAF; the interaction with KSR1 mediates KSR1-BRAF dimerization. Interacts with GLS. The cofactor is Mg(2+). Post-translationally, MAPKK is itself dependent on Ser/Thr phosphorylation for activity catalyzed by MAP kinase kinase kinases (RAF or MEKK1). Phosphorylated by MAP2K1/MEK1. As to expression, expressed abundantly in the adult brain and muscle.

It localises to the cytoplasm. The protein localises to the membrane. It carries out the reaction L-seryl-[protein] + ATP = O-phospho-L-seryl-[protein] + ADP + H(+). It catalyses the reaction L-threonyl-[protein] + ATP = O-phospho-L-threonyl-[protein] + ADP + H(+). The catalysed reaction is L-tyrosyl-[protein] + ATP = O-phospho-L-tyrosyl-[protein] + ADP + H(+). Catalyzes the concomitant phosphorylation of a threonine and a tyrosine residue in a Thr-Glu-Tyr sequence located in MAP kinases. Activates the ERK1 and ERK2 MAP kinases. Activates BRAF in a KSR1 or KSR2-dependent manner; by binding to KSR1 or KSR2 releases the inhibitory intramolecular interaction between KSR1 or KSR2 protein kinase and N-terminal domains which promotes KSR1 or KSR2-BRAF dimerization and BRAF activation. This Rattus norvegicus (Rat) protein is Dual specificity mitogen-activated protein kinase kinase 2 (Map2k2).